Reading from the N-terminus, the 386-residue chain is CUE domain-containing protein 1 (386 aa).

Residues 1 to 10 (MTSLFRRSSS) are compositionally biased toward low complexity. The disordered stretch occupies residues 1-40 (MTSLFRRSSSGSGGGGTAGARGGGGGTAAPQELNNSRPAR). The segment covering 11 to 27 (GSGGGGTAGARGGGGGT) has biased composition (gly residues). Residues 46–89 (EFNQAMDDFKTMFPNMDYDIIECVLRANSGAVDATIDQLLQMNL) form the CUE domain. Disordered regions lie at residues 147–172 (LAPP…RYRN), 195–225 (SIQG…DQES), and 367–386 (DFRG…REGQ). The span at 199-209 (NAGGPKPGSGE) shows a compositional bias: gly residues.

This Homo sapiens (Human) protein is CUE domain-containing protein 1 (CUEDC1).